We begin with the raw amino-acid sequence, 52 residues long: Rubredoxin (52 aa).

Positions 1-52 (MKKYVCTVCGYEYDPAEGDPDNGVKPGTSFDDLPADWVCPVCGAPKSEFEAA) constitute a Rubredoxin-like domain. The Fe cation site is built by cysteine 6, cysteine 9, cysteine 39, and cysteine 42.

The protein belongs to the rubredoxin family. Fe(3+) serves as cofactor.

The protein localises to the cytoplasm. In terms of biological role, rubredoxin is a small nonheme, iron protein lacking acid-labile sulfide. Its single Fe, chelated to 4 Cys, functions as an electron acceptor and may also stabilize the conformation of the molecule. Functionally, electron acceptor for cytoplasmic lactate dehydrogenase. In Nitratidesulfovibrio vulgaris (strain ATCC 29579 / DSM 644 / CCUG 34227 / NCIMB 8303 / VKM B-1760 / Hildenborough) (Desulfovibrio vulgaris), this protein is Rubredoxin (rub).